A 658-amino-acid chain; its full sequence is Biosynthetic arginine decarboxylase (658 aa).

At K127 the chain carries N6-(pyridoxal phosphate)lysine. 307–317 (FDVGGGLGVDY) is a binding site for substrate.

The protein belongs to the Orn/Lys/Arg decarboxylase class-II family. SpeA subfamily. As to quaternary structure, homotetramer. The cofactor is pyridoxal 5'-phosphate. It depends on Mg(2+) as a cofactor. In terms of processing, processed post-translationally to a 70 kDa mature form. Post-translationally, the N-terminus is blocked.

Its subcellular location is the periplasm. The enzyme catalyses L-arginine + H(+) = agmatine + CO2. Its pathway is amine and polyamine biosynthesis; agmatine biosynthesis; agmatine from L-arginine: step 1/1. Its activity is regulated as follows. Down-regulated by polyamine end products putrescine and spermidine. In terms of biological role, catalyzes the biosynthesis of agmatine from arginine. In Escherichia coli (strain K12), this protein is Biosynthetic arginine decarboxylase (speA).